Consider the following 470-residue polypeptide: Sulfate adenylyltransferase subunit 1 (470 aa).

Residues 22 to 236 (KELLRFITCG…YLETIKIDYA (215 aa)) form the tr-type G domain. Residues 31-38 (GSVDDGKS) are G1. 31 to 38 (GSVDDGKS) contributes to the GTP binding site. A G2 region spans residues 89–93 (GITID). The segment at 110–113 (DTPG) is G3. GTP is bound by residues 110-114 (DTPGH) and 165-168 (NKMD). Positions 165–168 (NKMD) are G4. The interval 202 to 204 (SAL) is G5.

Belongs to the TRAFAC class translation factor GTPase superfamily. Classic translation factor GTPase family. CysN/NodQ subfamily. As to quaternary structure, heterodimer composed of CysD, the smaller subunit, and CysN.

The catalysed reaction is sulfate + ATP + H(+) = adenosine 5'-phosphosulfate + diphosphate. The protein operates within sulfur metabolism; hydrogen sulfide biosynthesis; sulfite from sulfate: step 1/3. In terms of biological role, with CysD forms the ATP sulfurylase (ATPS) that catalyzes the adenylation of sulfate producing adenosine 5'-phosphosulfate (APS) and diphosphate, the first enzymatic step in sulfur assimilation pathway. APS synthesis involves the formation of a high-energy phosphoric-sulfuric acid anhydride bond driven by GTP hydrolysis by CysN coupled to ATP hydrolysis by CysD. This Francisella tularensis subsp. novicida (strain U112) protein is Sulfate adenylyltransferase subunit 1.